The chain runs to 62 residues: Large ribosomal subunit protein uL30 (62 aa).

It belongs to the universal ribosomal protein uL30 family. Part of the 50S ribosomal subunit.

This chain is Large ribosomal subunit protein uL30, found in Hydrogenovibrio crunogenus (strain DSM 25203 / XCL-2) (Thiomicrospira crunogena).